Here is a 499-residue protein sequence, read N- to C-terminus: MPDVVNVGFVPMATSARGVLFVFCDDALKFGPDTVKALGTAANAVKRAAATSQFKGKSGSTLDILAPEGLKAVRLVVIGAGKLAAIKDHDFLKLGGVLAGKIGGGKEAVTVIAELPTGAMTPAQGAAVAAGVRMRAYKFDRYKTKKKDGEDTPLNASVAIAVRDVAAAKKAFAPQNHVVDGVIMARELVNEPPNVLFPVEFARRASQLRKLGVGVEVLDVPAMKRLKMGALLGVSQGSTQPGRTVIMRWNGGKKGEQPVAFVGKGVCFDTGGISIKPSGSMEDMKGDMGGAACVVGLMHALAARKAKINVVGAIGLVENMPDGNAQRPGDIVTSMSGQTIEIINTDAEGRLVLADVLWYVAKKHKPKFMVDLATLTGAILVALGTEYAGLFSNNDQLSERLTEAGQATGERVWRLPMGPEYDKMMDSQFADMKNAGARHGGSITAAQFLQRFVDDTPWAHLDIAGTAMGAPKTDINQSWGSGYGVRLLDRLVADYYESK.

Residues Lys264 and Asp269 each coordinate Mn(2+). Lys276 is a catalytic residue. Residues Asp287, Asp346, and Glu348 each coordinate Mn(2+). Arg350 is an active-site residue.

Belongs to the peptidase M17 family. Mn(2+) is required as a cofactor.

It localises to the cytoplasm. The enzyme catalyses Release of an N-terminal amino acid, Xaa-|-Yaa-, in which Xaa is preferably Leu, but may be other amino acids including Pro although not Arg or Lys, and Yaa may be Pro. Amino acid amides and methyl esters are also readily hydrolyzed, but rates on arylamides are exceedingly low.. The catalysed reaction is Release of an N-terminal amino acid, preferentially leucine, but not glutamic or aspartic acids.. Its function is as follows. Presumably involved in the processing and regular turnover of intracellular proteins. Catalyzes the removal of unsubstituted N-terminal amino acids from various peptides. This Rhodopseudomonas palustris (strain BisB18) protein is Probable cytosol aminopeptidase.